A 417-amino-acid chain; its full sequence is Tryptophan synthase beta chain (417 aa).

Position 110 is an N6-(pyridoxal phosphate)lysine (Lys-110).

Belongs to the TrpB family. As to quaternary structure, tetramer of two alpha and two beta chains. Pyridoxal 5'-phosphate is required as a cofactor.

It catalyses the reaction (1S,2R)-1-C-(indol-3-yl)glycerol 3-phosphate + L-serine = D-glyceraldehyde 3-phosphate + L-tryptophan + H2O. It participates in amino-acid biosynthesis; L-tryptophan biosynthesis; L-tryptophan from chorismate: step 5/5. Its function is as follows. The beta subunit is responsible for the synthesis of L-tryptophan from indole and L-serine. This is Tryptophan synthase beta chain from Prochlorococcus marinus (strain NATL2A).